Here is a 461-residue protein sequence, read N- to C-terminus: Fumarate hydratase class II (461 aa).

Substrate is bound by residues 97–99 (SGT), R125, 128–131 (HPND), 138–140 (SSN), and T186. H187 serves as the catalytic Proton donor/acceptor. S317 is a catalytic residue. Residues S318 and 323–325 (KVN) contribute to the substrate site.

It belongs to the class-II fumarase/aspartase family. Fumarase subfamily. Homotetramer.

The protein resides in the cytoplasm. It catalyses the reaction (S)-malate = fumarate + H2O. It functions in the pathway carbohydrate metabolism; tricarboxylic acid cycle; (S)-malate from fumarate: step 1/1. Functionally, involved in the TCA cycle. Catalyzes the stereospecific interconversion of fumarate to L-malate. The protein is Fumarate hydratase class II of Ralstonia nicotianae (strain ATCC BAA-1114 / GMI1000) (Ralstonia solanacearum).